Reading from the N-terminus, the 267-residue chain is Hydroxyethylthiazole kinase (267 aa).

Met-46 provides a ligand contact to substrate. Residues Arg-121 and Thr-167 each coordinate ATP. A substrate-binding site is contributed by Ala-194.

It belongs to the Thz kinase family. It depends on Mg(2+) as a cofactor.

The enzyme catalyses 5-(2-hydroxyethyl)-4-methylthiazole + ATP = 4-methyl-5-(2-phosphooxyethyl)-thiazole + ADP + H(+). Its pathway is cofactor biosynthesis; thiamine diphosphate biosynthesis; 4-methyl-5-(2-phosphoethyl)-thiazole from 5-(2-hydroxyethyl)-4-methylthiazole: step 1/1. Functionally, catalyzes the phosphorylation of the hydroxyl group of 4-methyl-5-beta-hydroxyethylthiazole (THZ). This Rhizobium leguminosarum bv. trifolii (strain WSM2304) protein is Hydroxyethylthiazole kinase.